The primary structure comprises 396 residues: Tryptophan synthase beta chain (396 aa).

Lysine 96 is subject to N6-(pyridoxal phosphate)lysine.

Belongs to the TrpB family. As to quaternary structure, tetramer of two alpha and two beta chains. Requires pyridoxal 5'-phosphate as cofactor.

The enzyme catalyses (1S,2R)-1-C-(indol-3-yl)glycerol 3-phosphate + L-serine = D-glyceraldehyde 3-phosphate + L-tryptophan + H2O. Its pathway is amino-acid biosynthesis; L-tryptophan biosynthesis; L-tryptophan from chorismate: step 5/5. Functionally, the beta subunit is responsible for the synthesis of L-tryptophan from indole and L-serine. The sequence is that of Tryptophan synthase beta chain from Azobacteroides pseudotrichonymphae genomovar. CFP2.